Here is a 79-residue protein sequence, read N- to C-terminus: MKVAIIFLLSALALLNLAGNTTAKVIGKKANCPNTLVGCPRDYDPVCGTDGKTYANECILCFENRKFGTSIRIQRRGLC.

The N-terminal stretch at 1–23 (MKVAIIFLLSALALLNLAGNTTA) is a signal peptide. One can recognise a Kazal-like domain in the interval 26–79 (IGKKANCPNTLVGCPRDYDPVCGTDGKTYANECILCFENRKFGTSIRIQRRGLC). Disulfide bonds link cysteine 32/cysteine 61, cysteine 39/cysteine 58, and cysteine 47/cysteine 79.

In terms of tissue distribution, seminal vesicle.

The protein localises to the secreted. Its function is as follows. Serine protease inhibitor which exhibits anti-trypsin activity. In the pancreas, protects against trypsin-catalyzed premature activation of zymogens. Functionally, in the male reproductive tract, binds to sperm heads where it modulates sperm capacitance by inhibiting calcium uptake and nitrogen oxide (NO) production. This is Serine protease inhibitor Kazal-type 1-like from Rattus norvegicus (Rat).